The sequence spans 193 residues: Acyl carrier protein phosphodiesterase (193 aa).

Belongs to the AcpH family.

The catalysed reaction is holo-[ACP] + H2O = apo-[ACP] + (R)-4'-phosphopantetheine + H(+). Functionally, converts holo-ACP to apo-ACP by hydrolytic cleavage of the phosphopantetheine prosthetic group from ACP. The sequence is that of Acyl carrier protein phosphodiesterase from Escherichia coli O157:H7.